The chain runs to 322 residues: Probable F-box protein At1g60180 (322 aa).

One can recognise an F-box domain in the interval 45–88 (FCELSDECIAKILSGCPILESLTLSHCIYLTVLDLSKSLRLRTL).

The sequence is that of Probable F-box protein At1g60180 from Arabidopsis thaliana (Mouse-ear cress).